The primary structure comprises 1281 residues: Dynactin subunit 1 (1281 aa).

The disordered stretch occupies residues 1–25 (MAQSKRHVYSRTPSGSRMSAEASAR). The region spanning 48 to 90 (GATLFATGKWVGVILDEAKGKNDGTVQGRKYFTCDEGHGIFVR) is the CAP-Gly domain. The tract at residues 99 to 225 (DGADTTSPET…EEEGLRAQVR (127 aa)) is disordered. Positions 102–114 (DTTSPETPDSSAS) are enriched in polar residues. A phosphothreonine mark is found at T108, T145, T146, and T147. Basic residues predominate over residues 129-152 (SKLRGPKPKKAPTARKTTTRRPKP). Positions 161 to 205 (AGASSSLGPSGSASAGELSSSEPSTPAQTPLAAPIIPTPALTSPG) are enriched in low complexity. Phosphoserine is present on residues S179 and S212. The span at 214 to 225 (SKEEEGLRAQVR) shows a compositional bias: basic and acidic residues. 2 coiled-coil regions span residues 217 to 540 (EEGL…QQEA) and 952 to 1043 (IKEL…QSKR). Residues 911-1281 (EYDAERPPSK…LHQLHDRLIS (371 aa)) form an interaction with HPS6 region. Residues 1065 to 1084 (GEEQQRGGAPGQAPGIVPGP) form a disordered region.

Belongs to the dynactin 150 kDa subunit family. Monomer and homodimer. Subunit of dynactin, a multiprotein complex part of a tripartite complex with dynein and a adapter, such as BICDL1, BICD2 or HOOK3. The dynactin complex is built around ACTR1A/ACTB filament and consists of an actin-related filament composed of a shoulder domain, a pointed end and a barbed end. Its length is defined by its flexible shoulder domain. The soulder is composed of 2 DCTN1 subunits, 4 DCTN2 and 2 DCTN3. DCTN1/p150(glued) binds directly to microtubules and to cytoplasmic dynein. The 4 DCNT2 (via N-terminus) bind the ACTR1A filament and act as molecular rulers to determine the length. The pointed end is important for binding dynein-dynactin cargo adapters. Consists of 4 subunits: ACTR10, DCNT4, DCTN5 and DCTN6. The barbed end is composed of a CAPZA1:CAPZB heterodimers, which binds ACTR1A/ACTB filament and dynactin and stabilizes dynactin. Interacts with the C-terminus of MAPRE1, MAPRE2 and MAPRE3. Interacts (via C-terminus) with SNX6. Interacts with CLN3, DYNAP, ECPAS and FBXL5. Interacts with MISP; this interaction regulates its distribution at the cell cortex. Interacts with CEP131. Interacts with CEP126. Interacts with CLIP1. Interacts with dynein intermediate chain and dynein heavy chain. Interacts with PLK1 (via POLO-box domain). Interacts with TBCB. Binds preferentially to tyrosinated microtubules than to detyrosinated microtubules. Interacts with PARD6A. Interacts with HPS6. Interacts with KIF3A. Interacts with BICD2. Interacts with DST (isoform 9). Interacts with DST (isoform 1). Identified in a complex with MREG and RILP. Interacts with BCCIP (isoform 2/alpha). Interacts with DCDC1. Interacts with AKNA. Interacts with DYNC1I2. Interacts with RUFY3 and RUFY4. In terms of processing, ubiquitinated by a SCF complex containing FBXL5, leading to its degradation by the proteasome. Phosphorylation by SLK at Thr-145, Thr-146 and Thr-147 targets DCTN1 to the centrosome. It is uncertain if SLK phosphorylates all three threonines or one or two of them. PLK1-mediated phosphorylation at Ser-179 is essential for its localization in the nuclear envelope, promotes its dissociation from microtubules during early mitosis and positively regulates nuclear envelope breakdown during prophase.

The protein localises to the cytoplasm. It is found in the cytoskeleton. It localises to the microtubule organizing center. Its subcellular location is the centrosome. The protein resides in the centriole. The protein localises to the spindle. It is found in the nucleus envelope. It localises to the cell cortex. Its function is as follows. Part of the dynactin complex that activates the molecular motor dynein for ultra-processive transport along microtubules. Plays a key role in dynein-mediated retrograde transport of vesicles and organelles along microtubules by recruiting and tethering dynein to microtubules. Binds to both dynein and microtubules providing a link between specific cargos, microtubules and dynein. Essential for targeting dynein to microtubule plus ends, recruiting dynein to membranous cargos and enhancing dynein processivity (the ability to move along a microtubule for a long distance without falling off the track). Can also act as a brake to slow the dynein motor during motility along the microtubule. Can regulate microtubule stability by promoting microtubule formation, nucleation and polymerization and by inhibiting microtubule catastrophe in neurons. Inhibits microtubule catastrophe by binding both to microtubules and to tubulin, leading to enhanced microtubule stability along the axon. Plays a role in metaphase spindle orientation. Plays a role in centriole cohesion and subdistal appendage organization and function. Its recruitment to the centriole in a KIF3A-dependent manner is essential for the maintenance of centriole cohesion and the formation of subdistal appendage. Also required for microtubule anchoring at the mother centriole. Plays a role in primary cilia formation. The sequence is that of Dynactin subunit 1 (DCTN1) from Sus scrofa (Pig).